A 271-amino-acid polypeptide reads, in one-letter code: Diaminopimelate epimerase (271 aa).

Positions 13, 46, and 66 each coordinate substrate. The Proton donor role is filled by Cys-75. Substrate contacts are provided by residues 76 to 77, Asn-155, Asn-188, and 206 to 207; these read GN and ER. Residue Cys-215 is the Proton acceptor of the active site. Position 216–217 (216–217) interacts with substrate; that stretch reads GS.

This sequence belongs to the diaminopimelate epimerase family. As to quaternary structure, homodimer.

It is found in the cytoplasm. It catalyses the reaction (2S,6S)-2,6-diaminopimelate = meso-2,6-diaminopimelate. It participates in amino-acid biosynthesis; L-lysine biosynthesis via DAP pathway; DL-2,6-diaminopimelate from LL-2,6-diaminopimelate: step 1/1. Catalyzes the stereoinversion of LL-2,6-diaminopimelate (L,L-DAP) to meso-diaminopimelate (meso-DAP), a precursor of L-lysine and an essential component of the bacterial peptidoglycan. In Vesicomyosocius okutanii subsp. Calyptogena okutanii (strain HA), this protein is Diaminopimelate epimerase.